The following is a 1488-amino-acid chain: Indigoidine synthase (1488 aa).

The interval 229-585 (KNRAQRHPEQ…GGDGVARGYL (357 aa)) is adenylation. One can recognise a Carrier domain in the interval 1137-1212 (APRNPLEHQV…KLAAWLSRAR (76 aa)). O-(pantetheine 4'-phosphoryl)serine is present on serine 1172. A thioesterase region spans residues 1230–1346 (PIYCWPGLGG…ERVAAMNRKA (117 aa)).

Belongs to the ATP-dependent AMP-binding enzyme family. Pantetheine 4'-phosphate is required as a cofactor.

The catalysed reaction is 2 FMN + 2 L-glutamine + 2 ATP + O2 = indigoidine + 2 FMNH2 + 2 AMP + 2 diphosphate + 2 H2O. It catalyses the reaction FMN + L-glutamine + ATP = 3-amino-1,5-dihydropyridine-2,6-dione + FMNH2 + AMP + diphosphate. It carries out the reaction 2 3-amino-1,5-dihydropyridine-2,6-dione + O2 = indigoidine + 2 H2O. The protein operates within pigment biosynthesis. Its function is as follows. Nonribosomal peptide synthetase involved in the biosynthesis of the blue pigment indigoidine, which is implicated in pathogenicity and protection from oxidative stress. Catalyzes the synthesis of the blue pigment using L-Gln as a substrate. Two glutamine molecules are cyclized and oxidized to form indigoidine. The polypeptide is Indigoidine synthase (Dickeya dadantii (strain 3937) (Erwinia chrysanthemi (strain 3937))).